Reading from the N-terminus, the 368-residue chain is Isocitrate dehydrogenase [NAD] regulatory subunit 3, mitochondrial (368 aa).

The N-terminal 26 residues, 1–26 (MARRSVSIFNRLLANPPSPFTSLSRS), are a transit peptide targeting the mitochondrion.

This sequence belongs to the isocitrate and isopropylmalate dehydrogenases family. As to quaternary structure, heterooligomer of catalytic and regulatory subunits. Interacts with 14-3-3-like proteins GRF1 GRF3 and GRF8. As to expression, mainly expressed at a low level in pollen.

Its subcellular location is the mitochondrion. Performs an essential role in the oxidative function of the citric acid cycle. The chain is Isocitrate dehydrogenase [NAD] regulatory subunit 3, mitochondrial (IDH3) from Arabidopsis thaliana (Mouse-ear cress).